The sequence spans 397 residues: ATP-dependent RNA helicase eIF4A (397 aa).

Residues 24-52 (DSFDDMNLKSELLRGIYAYGFERPSAIQQ) carry the Q motif motif. The region spanning 55–225 (IMPVIKGHDV…TKFMRDPVRI (171 aa)) is the Helicase ATP-binding domain. Residue 68 to 75 (AQSGTGKT) coordinates ATP. The DEAD box signature appears at 173–176 (DEAD). The Helicase C-terminal domain occupies 236–397 (GIKQFYIAVE…EMPMNVADLI (162 aa)).

Belongs to the DEAD box helicase family. eIF4A subfamily. Component of the eIF4F complex, which composition varies with external and internal environmental conditions. It is composed of at least eIF4A, eIF4E and eIF4G.

Its subcellular location is the cytoplasm. The catalysed reaction is ATP + H2O = ADP + phosphate + H(+). In terms of biological role, ATP-dependent RNA helicase which is a subunit of the eIF4F complex involved in cap recognition and is required for mRNA binding to ribosome. In the current model of translation initiation, eIF4A unwinds RNA secondary structures in the 5'-UTR of mRNAs which is necessary to allow efficient binding of the small ribosomal subunit, and subsequent scanning for the initiator codon. This is ATP-dependent RNA helicase eIF4A (TIF1) from Chaetomium globosum (strain ATCC 6205 / CBS 148.51 / DSM 1962 / NBRC 6347 / NRRL 1970) (Soil fungus).